The primary structure comprises 307 residues: Protoheme IX farnesyltransferase (307 aa).

Transmembrane regions (helical) follow at residues 32 to 52 (MGIVNSNTLTVFTGFWLALHF), 65 to 85 (FFTIVGSALIMAGVCCLNNYI), 108 to 128 (PGFALAFGLVILLLGFVFLLL), 131 to 151 (PMAVLISFIGAFTYVVLYTLW), 158 to 178 (LNTVVGSISGAVPPLIGWAAI), 186 to 206 (IAWMLFLIMFIWQIPHFLALA), 251 to 271 (LGITFMVIATLLNIGWIALGL), and 287 to 307 (FVYSLNYLTILFVSMIVVTFF).

It belongs to the UbiA prenyltransferase family. Protoheme IX farnesyltransferase subfamily. As to quaternary structure, interacts with CtaA.

The protein localises to the cell membrane. The catalysed reaction is heme b + (2E,6E)-farnesyl diphosphate + H2O = Fe(II)-heme o + diphosphate. Its pathway is porphyrin-containing compound metabolism; heme O biosynthesis; heme O from protoheme: step 1/1. In terms of biological role, converts heme B (protoheme IX) to heme O by substitution of the vinyl group on carbon 2 of heme B porphyrin ring with a hydroxyethyl farnesyl side group. In Bacillus mycoides (strain KBAB4) (Bacillus weihenstephanensis), this protein is Protoheme IX farnesyltransferase.